The following is an 88-amino-acid chain: UPF0297 protein Bcer98_3100 (88 aa).

This sequence belongs to the UPF0297 family.

The polypeptide is UPF0297 protein Bcer98_3100 (Bacillus cytotoxicus (strain DSM 22905 / CIP 110041 / 391-98 / NVH 391-98)).